The primary structure comprises 912 residues: DNA ligase 4 (912 aa).

Glu271, Thr272, Lys273, Leu274, Arg278, Glu331, Lys345, Phe367, Glu427, Lys432, Lys449, and Lys451 together coordinate ATP. Catalysis depends on Lys273, which acts as the N6-AMP-lysine intermediate. Glu331 contributes to the Mg(2+) binding site. A Mg(2+)-binding site is contributed by Glu427. The segment at 610-620 (LATKHLHVGDD) is required for catalytic activity. 2 consecutive BRCT domains span residues 654-743 (KVSN…PRFM) and 846-912 (LRFH…QYLL).

It belongs to the ATP-dependent DNA ligase family. As to quaternary structure, interacts with XRCC4; the LIG4-XRCC4 subcomplex has a 1:2 stoichiometry and XRCC4 is required for LIG4 stability. Component of the core long-range non-homologous end joining (NHEJ) complex (also named DNA-PK complex) composed of PRKDC, LIG4, XRCC4, XRCC6/Ku70, XRCC5/Ku86 and NHEJ1/XLF. Additional component of the NHEJ complex includes PAXX. Following autophosphorylation, PRKDC dissociates from DNA, leading to formation of the short-range NHEJ complex, composed of LIG4, XRCC4, XRCC6/Ku70, XRCC5/Ku86 and NHEJ1/XLF. Interacts with DCLRE1C; the interaction is direct. Interacts with APLF. Requires Mg(2+) as cofactor.

It is found in the nucleus. The enzyme catalyses ATP + (deoxyribonucleotide)n-3'-hydroxyl + 5'-phospho-(deoxyribonucleotide)m = (deoxyribonucleotide)n+m + AMP + diphosphate.. Its function is as follows. DNA ligase involved in DNA non-homologous end joining (NHEJ); required for double-strand break (DSB) repair and V(D)J recombination. Catalyzes the NHEJ ligation step of the broken DNA during DSB repair by resealing the DNA breaks after the gap filling is completed. Joins single-strand breaks in a double-stranded polydeoxynucleotide in an ATP-dependent reaction. LIG4 is mechanistically flexible: it can ligate nicks as well as compatible DNA overhangs alone, while in the presence of XRCC4, it can ligate ends with 2-nucleotides (nt) microhomology and 1-nt gaps. Forms a subcomplex with XRCC4; the LIG4-XRCC4 subcomplex is responsible for the NHEJ ligation step and XRCC4 enhances the joining activity of LIG4. Binding of the LIG4-XRCC4 complex to DNA ends is dependent on the assembly of the DNA-dependent protein kinase complex DNA-PK to these DNA ends. LIG4 regulates nuclear localization of XRCC4. The protein is DNA ligase 4 of Cricetulus griseus (Chinese hamster).